A 1334-amino-acid chain; its full sequence is Aldehyde oxidase 3 (1334 aa).

Residues 8–95 (DELIFFVNGK…GAAVTTVEGI (88 aa)) form the 2Fe-2S ferredoxin-type domain. Residues Cys47, Cys52, Cys55, and Cys77 each coordinate [2Fe-2S] cluster. Gln116 serves as a coordination point for Mo-molybdopterin. Positions 117, 120, 152, and 154 each coordinate [2Fe-2S] cluster. Positions 236 to 421 (FRGERTTWIA…ISVFVPLSRK (186 aa)) constitute an FAD-binding PCMH-type domain. 264 to 271 (LVIGNTCL) is an FAD binding site. Ser320 is subject to Phosphoserine. FAD-binding residues include Ser354, His358, Asp367, and Leu411. 3 residues coordinate Mo-molybdopterin: Gly801, Leu1042, and Gln1198. The active-site Proton acceptor; for azaheterocycle hydroxylase activity is Glu1265.

This sequence belongs to the xanthine dehydrogenase family. As to quaternary structure, homodimer. It depends on [2Fe-2S] cluster as a cofactor. The cofactor is FAD. Mo-molybdopterin serves as cofactor.

The protein resides in the cytoplasm. It catalyses the reaction an aldehyde + O2 + H2O = a carboxylate + H2O2 + H(+). Functionally, oxidase with broad substrate specificity, oxidizing aromatic azaheterocycles, such as N1-methylnicotinamide and phthalazine, as well as aldehydes, such as benzaldehyde, retinal and pyridoxal. Plays a key role in the metabolism of xenobiotics and drugs containing aromatic azaheterocyclic substituents. Is probably involved in the regulation of reactive oxygen species homeostasis. Is a prominent source of superoxide generation via the one-electron reduction of molecular oxygen. Also catalyzes nitric oxide (NO) production; under anaerobic conditions, reduces nitrite to NO with NADH or aldehyde as electron donor, but under aerobic conditions, NADH is the preferred substrate. These reactions may be catalyzed by several isozymes. In Rattus norvegicus (Rat), this protein is Aldehyde oxidase 3 (Aox3).